A 136-amino-acid polypeptide reads, in one-letter code: Pterin-4-alpha-carbinolamine dehydratase 2 (136 aa).

An N6-acetyllysine; alternate mark is found at Lys-120, Lys-124, and Lys-131. 3 positions are modified to N6-succinyllysine; alternate: Lys-120, Lys-124, and Lys-131.

Belongs to the pterin-4-alpha-carbinolamine dehydratase family. In terms of assembly, homotetramer. Interacts with DYRK1B.

It carries out the reaction (4aS,6R)-4a-hydroxy-L-erythro-5,6,7,8-tetrahydrobiopterin = (6R)-L-erythro-6,7-dihydrobiopterin + H2O. In terms of biological role, involved in tetrahydrobiopterin biosynthesis. Seems to both prevent the formation of 7-pterins and accelerate the formation of quinonoid-BH2. Its function is as follows. Regulates the dimerization of homeodomain protein HNF-1-alpha and enhances its transcriptional activity. This Mus musculus (Mouse) protein is Pterin-4-alpha-carbinolamine dehydratase 2 (Pcbd2).